Reading from the N-terminus, the 414-residue chain is UDP-N-acetylmuramoylalanine--D-glutamate ligase (414 aa).

104–110 (GSNGKST) is an ATP binding site.

Belongs to the MurCDEF family.

The protein localises to the cytoplasm. It catalyses the reaction UDP-N-acetyl-alpha-D-muramoyl-L-alanine + D-glutamate + ATP = UDP-N-acetyl-alpha-D-muramoyl-L-alanyl-D-glutamate + ADP + phosphate + H(+). It participates in cell wall biogenesis; peptidoglycan biosynthesis. Its function is as follows. Cell wall formation. Catalyzes the addition of glutamate to the nucleotide precursor UDP-N-acetylmuramoyl-L-alanine (UMA). The sequence is that of UDP-N-acetylmuramoylalanine--D-glutamate ligase from Francisella philomiragia subsp. philomiragia (strain ATCC 25017 / CCUG 19701 / FSC 153 / O#319-036).